The following is a 183-amino-acid chain: Protein Syd (183 aa).

This sequence belongs to the Syd family.

Its subcellular location is the cell inner membrane. Interacts with the SecY protein in vivo. May bind preferentially to an uncomplexed state of SecY, thus functioning either as a chelating agent for excess SecY in the cell or as a regulatory factor that negatively controls the translocase function. This chain is Protein Syd, found in Aliivibrio fischeri (strain ATCC 700601 / ES114) (Vibrio fischeri).